Consider the following 395-residue polypeptide: uncharacterized protein (395 aa).

This is an uncharacterized protein from Escherichia coli (strain K12).